The sequence spans 367 residues: Histidinol-phosphate aminotransferase 1 (367 aa).

K229 is modified (N6-(pyridoxal phosphate)lysine).

It belongs to the class-II pyridoxal-phosphate-dependent aminotransferase family. Histidinol-phosphate aminotransferase subfamily. As to quaternary structure, homodimer. Pyridoxal 5'-phosphate serves as cofactor.

It carries out the reaction L-histidinol phosphate + 2-oxoglutarate = 3-(imidazol-4-yl)-2-oxopropyl phosphate + L-glutamate. It participates in amino-acid biosynthesis; L-histidine biosynthesis; L-histidine from 5-phospho-alpha-D-ribose 1-diphosphate: step 7/9. The chain is Histidinol-phosphate aminotransferase 1 (hisC1) from Mesorhizobium japonicum (strain LMG 29417 / CECT 9101 / MAFF 303099) (Mesorhizobium loti (strain MAFF 303099)).